Reading from the N-terminus, the 232-residue chain is Ubiquinone biosynthesis O-methyltransferase (232 aa).

Residues R36, G55, D76, and M120 each contribute to the S-adenosyl-L-methionine site.

Belongs to the methyltransferase superfamily. UbiG/COQ3 family.

It catalyses the reaction a 3-demethylubiquinol + S-adenosyl-L-methionine = a ubiquinol + S-adenosyl-L-homocysteine + H(+). The catalysed reaction is a 3-(all-trans-polyprenyl)benzene-1,2-diol + S-adenosyl-L-methionine = a 2-methoxy-6-(all-trans-polyprenyl)phenol + S-adenosyl-L-homocysteine + H(+). It functions in the pathway cofactor biosynthesis; ubiquinone biosynthesis. Its function is as follows. O-methyltransferase that catalyzes the 2 O-methylation steps in the ubiquinone biosynthetic pathway. The polypeptide is Ubiquinone biosynthesis O-methyltransferase (Burkholderia lata (strain ATCC 17760 / DSM 23089 / LMG 22485 / NCIMB 9086 / R18194 / 383)).